The chain runs to 186 residues: Peptidyl-tRNA hydrolase (186 aa).

Position 14 (tyrosine 14) interacts with tRNA. Histidine 19 acts as the Proton acceptor in catalysis. TRNA-binding residues include tyrosine 64, asparagine 66, and asparagine 112.

It belongs to the PTH family. In terms of assembly, monomer.

It is found in the cytoplasm. It carries out the reaction an N-acyl-L-alpha-aminoacyl-tRNA + H2O = an N-acyl-L-amino acid + a tRNA + H(+). Functionally, hydrolyzes ribosome-free peptidyl-tRNAs (with 1 or more amino acids incorporated), which drop off the ribosome during protein synthesis, or as a result of ribosome stalling. In terms of biological role, catalyzes the release of premature peptidyl moieties from peptidyl-tRNA molecules trapped in stalled 50S ribosomal subunits, and thus maintains levels of free tRNAs and 50S ribosomes. This Bacillus cytotoxicus (strain DSM 22905 / CIP 110041 / 391-98 / NVH 391-98) protein is Peptidyl-tRNA hydrolase.